Here is a 344-residue protein sequence, read N- to C-terminus: Acyl-CoA ligase clz12 (344 aa).

2 AMP-binding regions span residues 2-239 (VQRS…IIKV) and 248-322 (ELET…PSGK).

This sequence belongs to the ATP-dependent AMP-binding enzyme family.

Its pathway is secondary metabolite biosynthesis. Functionally, acyl-CoA ligase; part of the gene cluster that mediates the biosynthesis of squalestatin S1 (SQS1, also known as zaragozic acid A), a heavily oxidized fungal polyketide that offers potent cholesterol lowering activity by targeting squalene synthase (SS). SQS1 is composed of a 2,8-dioxobicyclic[3.2.1]octane-3,4,5-tricarboxyclic acid core that is connected to two lipophilic polyketide arms. These initial steps feature the priming of an unusual benzoic acid starter unit onto the highly reducing polyketide synthase clz14, followed by oxaloacetate extension and product release to generate a tricarboxylic acid containing product. The phenylalanine ammonia lyase (PAL) clz10 and the acyl-CoA ligase clz12 are involved in transforming phenylalanine into benzoyl-CoA. The citrate synthase-like protein clz17 is involved in connecting the C-alpha-carbons of the hexaketide chain and oxaloacetate to afford the tricarboxylic acid unit. The potential hydrolytic enzymes, clz11 and clz13, are in close proximity to pks2 and may participate in product release. On the other side, the tetraketide arm is synthesized by a the squalestatin tetraketide synthase clz2 and enzymatically esterified to the core in the last biosynthetic step, by the acetyltransferase clz6. The biosynthesis of the tetraketide must involve 3 rounds of chain extension. After the first and second rounds methyl-transfer occurs, and in all rounds of extension the ketoreductase and dehydratase are active. The enoyl reductase and C-MeT of clz2 are not active in the final round of extension. The acetyltransferase clz6 appears to have a broad substrate selectivity for its acyl CoA substrate, allowing the in vitro synthesis of novel squalestatins. The biosynthesis of SQS1 requires several oxidative steps likely performed by oxidoreductases clz3, clz15 and clz16. Finally, in support of the identification of the cluster as being responsible for SQS1 production, the cluster contains a gene encoding a putative squalene synthase (SS) clz20, suggesting a likely mechanism for self-resistance. This is Acyl-CoA ligase clz12 from Cochliobolus lunatus (Filamentous fungus).